A 315-amino-acid chain; its full sequence is Prephenate dehydratase (315 aa).

The Prephenate dehydratase domain maps to Arg-3–Val-189. The ACT domain maps to Ser-203–Pro-280.

Homodimer.

The catalysed reaction is prephenate + H(+) = 3-phenylpyruvate + CO2 + H2O. The protein operates within amino-acid biosynthesis; L-phenylalanine biosynthesis; phenylpyruvate from prephenate: step 1/1. In Mycobacterium ulcerans (strain Agy99), this protein is Prephenate dehydratase (pheA).